The following is a 100-amino-acid chain: NADH-quinone oxidoreductase subunit K (100 aa).

3 helical membrane-spanning segments follow: residues 4-24 (LQHG…GLLI), 28-48 (LLFM…AFVV), and 60-80 (VMYI…LALL).

Belongs to the complex I subunit 4L family. In terms of assembly, NDH-1 is composed of 13 different subunits. Subunits NuoA, H, J, K, L, M, N constitute the membrane sector of the complex.

It localises to the cell inner membrane. It carries out the reaction a quinone + NADH + 5 H(+)(in) = a quinol + NAD(+) + 4 H(+)(out). In terms of biological role, NDH-1 shuttles electrons from NADH, via FMN and iron-sulfur (Fe-S) centers, to quinones in the respiratory chain. The immediate electron acceptor for the enzyme in this species is believed to be ubiquinone. Couples the redox reaction to proton translocation (for every two electrons transferred, four hydrogen ions are translocated across the cytoplasmic membrane), and thus conserves the redox energy in a proton gradient. The sequence is that of NADH-quinone oxidoreductase subunit K from Yersinia pseudotuberculosis serotype O:1b (strain IP 31758).